Consider the following 358-residue polypeptide: Phospho-N-acetylmuramoyl-pentapeptide-transferase (358 aa).

Helical transmembrane passes span 13 to 47 (LFIL…SIFI), 81 to 101 (MGGI…TINL), 106 to 126 (LILL…DDYL), 148 to 168 (ISII…LITI), 171 to 191 (SWAI…LVGI), 201 to 221 (LDGL…TEIL), 228 to 248 (LFVF…FLKY), 255 to 275 (IFMG…IALL), 278 to 298 (SIFT…SVII), and 336 to 356 (IVEN…VLKI).

It belongs to the glycosyltransferase 4 family. MraY subfamily. Mg(2+) is required as a cofactor.

Its subcellular location is the cell inner membrane. The catalysed reaction is UDP-N-acetyl-alpha-D-muramoyl-L-alanyl-gamma-D-glutamyl-meso-2,6-diaminopimeloyl-D-alanyl-D-alanine + di-trans,octa-cis-undecaprenyl phosphate = di-trans,octa-cis-undecaprenyl diphospho-N-acetyl-alpha-D-muramoyl-L-alanyl-D-glutamyl-meso-2,6-diaminopimeloyl-D-alanyl-D-alanine + UMP. The protein operates within cell wall biogenesis; peptidoglycan biosynthesis. In terms of biological role, catalyzes the initial step of the lipid cycle reactions in the biosynthesis of the cell wall peptidoglycan: transfers peptidoglycan precursor phospho-MurNAc-pentapeptide from UDP-MurNAc-pentapeptide onto the lipid carrier undecaprenyl phosphate, yielding undecaprenyl-pyrophosphoryl-MurNAc-pentapeptide, known as lipid I. This Prochlorococcus marinus (strain MIT 9301) protein is Phospho-N-acetylmuramoyl-pentapeptide-transferase.